Reading from the N-terminus, the 55-residue chain is Neurotoxin BmP08 (55 aa).

Positions 1 to 23 (MKIFFAVLVILVLFSMLIWTAYG) are cleaved as a signal peptide. 3 disulfide bridges follow: Cys-30/Cys-45, Cys-36/Cys-50, and Cys-39/Cys-53.

As to expression, expressed by the venom gland.

It localises to the secreted. This Olivierus martensii (Manchurian scorpion) protein is Neurotoxin BmP08.